A 610-amino-acid polypeptide reads, in one-letter code: UvrABC system protein C (610 aa).

Positions 16-94 (SQPGVYRMYD…IKLYQPRYNV (79 aa)) constitute a GIY-YIG domain. In terms of domain architecture, UVR spans 204 to 239 (DQVLTQLIARMEKASQDLAFEEAARIRDQIQAVRRV).

This sequence belongs to the UvrC family. As to quaternary structure, interacts with UvrB in an incision complex.

The protein resides in the cytoplasm. The UvrABC repair system catalyzes the recognition and processing of DNA lesions. UvrC both incises the 5' and 3' sides of the lesion. The N-terminal half is responsible for the 3' incision and the C-terminal half is responsible for the 5' incision. This chain is UvrABC system protein C, found in Salmonella paratyphi C (strain RKS4594).